A 298-amino-acid polypeptide reads, in one-letter code: Probable 3-mercaptopyruvate sulfurtransferase (298 aa).

The 118-residue stretch at 24–141 (NAQKTVLLDA…WKTEGLELET (118 aa)) folds into the Rhodanese 1 domain. Residues 142 to 175 (GEPRTPKPVVYEGAKLNKDLVASFDDIVKVIESP) form a hinge region. Serine 164 carries the post-translational modification Phosphoserine. The 117-residue stretch at 176–292 (DAAGVHIVDA…YGKRANEDSS (117 aa)) folds into the Rhodanese 2 domain. Arginine 190 lines the substrate pocket. Cysteine 252 (cysteine persulfide intermediate) is an active-site residue.

The protein resides in the mitochondrion. It catalyses the reaction 2-oxo-3-sulfanylpropanoate + [thioredoxin]-dithiol = [thioredoxin]-disulfide + hydrogen sulfide + pyruvate + H(+). Required for formation of the 2-thio group of the 5-methoxycarbonylmethyl-2-thiouridine modified base in some tRNAs. The protein is Probable 3-mercaptopyruvate sulfurtransferase (tum1) of Schizosaccharomyces pombe (strain 972 / ATCC 24843) (Fission yeast).